Consider the following 301-residue polypeptide: Epimerase family protein Mb2239 (301 aa).

Belongs to the NAD(P)-dependent epimerase/dehydratase family. SDR39U1 subfamily.

The protein is Epimerase family protein Mb2239 of Mycobacterium bovis (strain ATCC BAA-935 / AF2122/97).